The sequence spans 351 residues: UDP-3-O-acylglucosamine N-acyltransferase (351 aa).

His-239 functions as the Proton acceptor in the catalytic mechanism.

This sequence belongs to the transferase hexapeptide repeat family. LpxD subfamily. Homotrimer.

It catalyses the reaction a UDP-3-O-[(3R)-3-hydroxyacyl]-alpha-D-glucosamine + a (3R)-hydroxyacyl-[ACP] = a UDP-2-N,3-O-bis[(3R)-3-hydroxyacyl]-alpha-D-glucosamine + holo-[ACP] + H(+). Its pathway is bacterial outer membrane biogenesis; LPS lipid A biosynthesis. Functionally, catalyzes the N-acylation of UDP-3-O-acylglucosamine using 3-hydroxyacyl-ACP as the acyl donor. Is involved in the biosynthesis of lipid A, a phosphorylated glycolipid that anchors the lipopolysaccharide to the outer membrane of the cell. This is UDP-3-O-acylglucosamine N-acyltransferase from Vibrio cholerae serotype O1 (strain ATCC 39315 / El Tor Inaba N16961).